Reading from the N-terminus, the 259-residue chain is Phosphatidylglycerol--prolipoprotein diacylglyceryl transferase (259 aa).

Transmembrane regions (helical) follow at residues 9-29, 55-75, 92-112, and 117-137; these read IIFS…VIGI, FITY…VLLY, EGGM…YLFC, and INFL…LFLG. Arg-138 provides a ligand contact to a 1,2-diacyl-sn-glycero-3-phospho-(1'-sn-glycerol). Transmembrane regions (helical) follow at residues 172–192, 201–221, and 228–248; these read QLYE…YTTF, GLNS…IEIF, and IGFI…MLLL.

It belongs to the Lgt family.

It localises to the cell inner membrane. The catalysed reaction is L-cysteinyl-[prolipoprotein] + a 1,2-diacyl-sn-glycero-3-phospho-(1'-sn-glycerol) = an S-1,2-diacyl-sn-glyceryl-L-cysteinyl-[prolipoprotein] + sn-glycerol 1-phosphate + H(+). Its pathway is protein modification; lipoprotein biosynthesis (diacylglyceryl transfer). Its function is as follows. Catalyzes the transfer of the diacylglyceryl group from phosphatidylglycerol to the sulfhydryl group of the N-terminal cysteine of a prolipoprotein, the first step in the formation of mature lipoproteins. This Rickettsia conorii (strain ATCC VR-613 / Malish 7) protein is Phosphatidylglycerol--prolipoprotein diacylglyceryl transferase.